The sequence spans 339 residues: Probable scoulerine-9-O-methyltransferase OMT3B (339 aa).

Methionine 161 lines the S-adenosyl-L-methionine pocket. Aspartate 164 contacts substrate. S-adenosyl-L-methionine contacts are provided by residues threonine 165, glycine 191, aspartate 214, 228 to 229, and lysine 242; that span reads DV. A substrate-binding site is contributed by 243–247; the sequence is SILHE. The active-site Proton acceptor is the histidine 246.

It belongs to the class I-like SAM-binding methyltransferase superfamily. Cation-independent O-methyltransferase family. COMT subfamily.

It catalyses the reaction (S)-scoulerine + S-adenosyl-L-methionine = (S)-tetrahydrocolumbamine + S-adenosyl-L-homocysteine + H(+). It functions in the pathway alkaloid biosynthesis. In terms of biological role, methyltransferase involved in the biosynthesis of the benzylisoquinoline alkaloid noscapine. Catalyzes the conversion of (S)-scoulerine to (S)-tetrahydrocolumbamine. In Papaver somniferum (Opium poppy), this protein is Probable scoulerine-9-O-methyltransferase OMT3B.